We begin with the raw amino-acid sequence, 410 residues long: Protein king tubby 2 (410 aa).

The span at 48 to 72 (SPNNPDQILTSTGNASITTTPTSPY) shows a compositional bias: polar residues. Disordered regions lie at residues 48 to 109 (SPNN…STRH) and 121 to 159 (ISPALMNNNGGSHHDSSSGKSVEHSSPQASGHNDTEGDV). The segment covering 132-143 (SHHDSSSGKSVE) has biased composition (basic and acidic residues).

Belongs to the TUB family.

Its subcellular location is the cytoplasm. The protein localises to the nucleus. This chain is Protein king tubby 2 (king-tubby2), found in Aedes aegypti (Yellowfever mosquito).